Here is a 514-residue protein sequence, read N- to C-terminus: Activin receptor type-2A (514 aa).

Residues 1–20 (MGAATKLAFAVFLISCSSAG) form the signal peptide. Over 21 to 136 (SILGRSETKE…TSNPVTTKPP (116 aa)) the chain is Extracellular. Intrachain disulfides connect Cys31/Cys61, Cys51/Cys79, Cys86/Cys105, Cys92/Cys104, and Cys106/Cys111. Residues Asn46, Asn67, and Asn88 are each glycosylated (N-linked (GlcNAc...) asparagine). The helical transmembrane segment at 137 to 162 (LFNTLLYSLVPIMVVAVIVLFSFWMY) threads the bilayer. The Cytoplasmic segment spans residues 163 to 514 (RHHKLAYPPV…VDFPPKESSL (352 aa)). The region spanning 193–486 (LQLLEVKARG…EERIIQMQKL (294 aa)) is the Protein kinase domain. ATP contacts are provided by residues 199-207 (KARGRFGCV) and Lys220. Catalysis depends on Asp323, which acts as the Proton acceptor.

This sequence belongs to the protein kinase superfamily. TKL Ser/Thr protein kinase family. TGFB receptor subfamily.

The protein resides in the cell membrane. It carries out the reaction L-threonyl-[receptor-protein] + ATP = O-phospho-L-threonyl-[receptor-protein] + ADP + H(+). The catalysed reaction is L-seryl-[receptor-protein] + ATP = O-phospho-L-seryl-[receptor-protein] + ADP + H(+). Its function is as follows. Receptor for activin A, activin B and inhibin A. Involved in transmembrane signaling. This chain is Activin receptor type-2A (acvr2a), found in Xenopus laevis (African clawed frog).